The chain runs to 745 residues: Inhibitor of nuclear factor kappa-B kinase subunit alpha (745 aa).

The region spanning 15–300 (WEMRERLGTG…IDLTLKQPRC (286 aa)) is the Protein kinase domain. ATP-binding positions include 21–29 (LGTGGFGNV) and Lys44. Phosphothreonine; by PKB/AKT1 and SGK1 is present on Thr23. The Proton acceptor role is filled by Asp144. Ser176 bears the Phosphoserine; by MAP3K14 mark. Ser180 carries the phosphoserine; by SGK1 modification. Residues 455–476 (LLRYNANLTKMKNTLISASQQL) are leucine-zipper. Residues 738–743 (LDWSWL) are NEMO-binding.

It belongs to the protein kinase superfamily. Ser/Thr protein kinase family. I-kappa-B kinase subfamily. Component of the I-kappa-B-kinase (IKK) core complex consisting of CHUK, IKBKB and IKBKG; probably four alpha/CHUK-beta/IKBKB dimers are associated with four gamma/IKBKG subunits. The IKK core complex seems to associate with regulatory or adapter proteins to form a IKK-signalosome holo-complex. The IKK complex associates with TERF2IP/RAP1, leading to promote IKK-mediated phosphorylation of RELA/p65. Part of a complex composed of NCOA2, NCOA3, CHUK/IKKA, IKBKB, IKBKG and CREBBP. Part of a 70-90 kDa complex at least consisting of CHUK/IKKA, IKBKB, NFKBIA, RELA, ELP1 and MAP3K14. Directly interacts with TRPC4AP. May interact with TRAF2. Interacts with NALP2. May interact with MAVS/IPS1. Interacts with ARRB1 and ARRB2. Interacts with NLRC5; prevents CHUK phosphorylation and kinase activity. Interacts with PIAS1; this interaction induces PIAS1 phosphorylation. Interacts with ZNF268 isoform 2; the interaction is further increased in a TNF-alpha-dependent manner. Interacts with LRRC14. Interacts with SASH1. Directly interacts with DDX3X after the physiological activation of the TLR7 and TLR8 pathways; this interaction enhances CHUK autophosphorylation. In terms of processing, ubiquitinated by TRIM56 via 'Lys-63'-linked ubiquitination, promoting activation of CHUK/IKKA. Phosphorylated by MAP3K14/NIK, AKT and to a lesser extent by MEKK1, and dephosphorylated by PP2A. Autophosphorylated. In terms of tissue distribution, ubiquitous only for isoform 1, isoforms 2 and 3 are expressed predominantly in brain and T-lymphocytes.

It localises to the cytoplasm. It is found in the nucleus. The enzyme catalyses L-seryl-[I-kappa-B protein] + ATP = O-phospho-L-seryl-[I-kappa-B protein] + ADP + H(+). With respect to regulation, activated when phosphorylated and inactivated when dephosphorylated. Serine kinase that plays an essential role in the NF-kappa-B signaling pathway which is activated by multiple stimuli such as inflammatory cytokines, bacterial or viral products, DNA damages or other cellular stresses. Acts as a part of the canonical IKK complex in the conventional pathway of NF-kappa-B activation and phosphorylates inhibitors of NF-kappa-B on serine residues. These modifications allow polyubiquitination of the inhibitors and subsequent degradation by the proteasome. In turn, free NF-kappa-B is translocated into the nucleus and activates the transcription of hundreds of genes involved in immune response, growth control, or protection against apoptosis. Negatively regulates the pathway by phosphorylating the scaffold protein TAXBP1 and thus promoting the assembly of the A20/TNFAIP3 ubiquitin-editing complex (composed of A20/TNFAIP3, TAX1BP1, and the E3 ligases ITCH and RNF11). Therefore, CHUK plays a key role in the negative feedback of NF-kappa-B canonical signaling to limit inflammatory gene activation. As part of the non-canonical pathway of NF-kappa-B activation, the MAP3K14-activated CHUK/IKKA homodimer phosphorylates NFKB2/p100 associated with RelB, inducing its proteolytic processing to NFKB2/p52 and the formation of NF-kappa-B RelB-p52 complexes. In turn, these complexes regulate genes encoding molecules involved in B-cell survival and lymphoid organogenesis. Also participates in the negative feedback of the non-canonical NF-kappa-B signaling pathway by phosphorylating and destabilizing MAP3K14/NIK. Within the nucleus, phosphorylates CREBBP and consequently increases both its transcriptional and histone acetyltransferase activities. Modulates chromatin accessibility at NF-kappa-B-responsive promoters by phosphorylating histones H3 at 'Ser-10' that are subsequently acetylated at 'Lys-14' by CREBBP. Additionally, phosphorylates the CREBBP-interacting protein NCOA3. Also phosphorylates FOXO3 and may regulate this pro-apoptotic transcription factor. Phosphorylates RIPK1 at 'Ser-25' which represses its kinase activity and consequently prevents TNF-mediated RIPK1-dependent cell death. Phosphorylates AMBRA1 following mitophagy induction, promoting AMBRA1 interaction with ATG8 family proteins and its mitophagic activity. This is Inhibitor of nuclear factor kappa-B kinase subunit alpha (Chuk) from Mus musculus (Mouse).